We begin with the raw amino-acid sequence, 255 residues long: 4-diphosphocytidyl-2-C-methyl-D-erythritol kinase (255 aa).

Lys6 is a catalytic residue. An ATP-binding site is contributed by Pro95 to Ser105. Asp137 is a catalytic residue.

It belongs to the GHMP kinase family. IspE subfamily.

It carries out the reaction 4-CDP-2-C-methyl-D-erythritol + ATP = 4-CDP-2-C-methyl-D-erythritol 2-phosphate + ADP + H(+). It participates in isoprenoid biosynthesis; isopentenyl diphosphate biosynthesis via DXP pathway; isopentenyl diphosphate from 1-deoxy-D-xylulose 5-phosphate: step 3/6. Catalyzes the phosphorylation of the position 2 hydroxy group of 4-diphosphocytidyl-2C-methyl-D-erythritol. In Campylobacter jejuni subsp. jejuni serotype O:23/36 (strain 81-176), this protein is 4-diphosphocytidyl-2-C-methyl-D-erythritol kinase.